A 266-amino-acid chain; its full sequence is Apolipoprotein A-I (266 aa).

Positions 1 to 18 (MKAVVLTLAVLFLTGSQA) are cleaved as a signal peptide. 2 repeat units span residues 67-88 (LKLL…EQIG) and 89-110 (PVTQ…QEMN). A 10 X approximate tandem repeats region spans residues 67-266 (LKLLDNWDSL…DEATKKLNSQ (200 aa)). Met109 bears the Methionine sulfoxide mark. Residues 111–121 (KDLEEVKKKVQ) form a 3; half-length repeat. 5 tandem repeats follow at residues 122 to 143 (PYLD…QKVA), 144 to 165 (PLGA…EKLS), 166 to 187 (PLGE…AQLA), 188 to 209 (PYSE…EGGG), and 210 to 231 (AALT…EKAK). The 9; half-length repeat unit spans residues 232 to 242 (PALEDLRQGLL). The stretch at 243-266 (PVLENFRDSLLAAVDEATKKLNSQ) is repeat 10.

This sequence belongs to the apolipoprotein A1/A4/E family. In terms of assembly, homodimer. Interacts with APOA1BP and CLU. Component of a sperm activating protein complex (SPAP), consisting of APOA1, an immunoglobulin heavy chain, an immunoglobulin light chain and albumin. Interacts with NDRG1. Interacts with SCGB3A2. Interacts with NAXE and YJEFN3. Post-translationally, glycosylated. Palmitoylated. In terms of processing, phosphorylation sites are present in the extracellular medium.

Its subcellular location is the secreted. Participates in the reverse transport of cholesterol from tissues to the liver for excretion by promoting cholesterol efflux from tissues and by acting as a cofactor for the lecithin cholesterol acyltransferase (LCAT). As part of the SPAP complex, activates spermatozoa motility. The chain is Apolipoprotein A-I (APOA1) from Neomonachus schauinslandi (Hawaiian monk seal).